We begin with the raw amino-acid sequence, 83 residues long: Small ribosomal subunit protein eS21 (83 aa).

Position 1 is an N-acetylmethionine (Met1). Lys41 is covalently cross-linked (Glycyl lysine isopeptide (Lys-Gly) (interchain with G-Cter in SUMO2)).

Belongs to the eukaryotic ribosomal protein eS21 family. In terms of assembly, component of the 40S small ribosomal subunit.

Its subcellular location is the cytoplasm. It localises to the cytosol. The protein localises to the rough endoplasmic reticulum. In terms of biological role, component of the small ribosomal subunit. The ribosome is a large ribonucleoprotein complex responsible for the synthesis of proteins in the cell. The protein is Small ribosomal subunit protein eS21 (RPS21) of Oryctolagus cuniculus (Rabbit).